Consider the following 280-residue polypeptide: Large ribosomal subunit protein uL2 (280 aa).

Disordered stretches follow at residues 33-55 and 224-266; these read LTEG…RRRG and AMNP…KASQ. Residues 256–266 are compositionally biased toward basic residues; the sequence is TRTRNKNKASQ.

The protein belongs to the universal ribosomal protein uL2 family. As to quaternary structure, part of the 50S ribosomal subunit. Forms a bridge to the 30S subunit in the 70S ribosome.

In terms of biological role, one of the primary rRNA binding proteins. Required for association of the 30S and 50S subunits to form the 70S ribosome, for tRNA binding and peptide bond formation. It has been suggested to have peptidyltransferase activity; this is somewhat controversial. Makes several contacts with the 16S rRNA in the 70S ribosome. This chain is Large ribosomal subunit protein uL2, found in Ruegeria pomeroyi (strain ATCC 700808 / DSM 15171 / DSS-3) (Silicibacter pomeroyi).